We begin with the raw amino-acid sequence, 235 residues long: Purine nucleoside phosphorylase DeoD-type (235 aa).

Residue His4 coordinates a purine D-ribonucleoside. Phosphate-binding positions include Gly20, Arg24, Arg43, and Arg87–Thr90. A purine D-ribonucleoside-binding positions include Glu179–Glu181 and Ser203–Asp204. Residue Asp204 is the Proton donor of the active site.

The protein belongs to the PNP/UDP phosphorylase family. As to quaternary structure, homohexamer; trimer of homodimers.

It carries out the reaction a purine D-ribonucleoside + phosphate = a purine nucleobase + alpha-D-ribose 1-phosphate. It catalyses the reaction a purine 2'-deoxy-D-ribonucleoside + phosphate = a purine nucleobase + 2-deoxy-alpha-D-ribose 1-phosphate. In terms of biological role, catalyzes the reversible phosphorolytic breakdown of the N-glycosidic bond in the beta-(deoxy)ribonucleoside molecules, with the formation of the corresponding free purine bases and pentose-1-phosphate. The protein is Purine nucleoside phosphorylase DeoD-type of Clostridium perfringens (strain ATCC 13124 / DSM 756 / JCM 1290 / NCIMB 6125 / NCTC 8237 / Type A).